A 292-amino-acid chain; its full sequence is Cyclin-dependent kinase 5 (292 aa).

The Protein kinase domain maps to 4–286 (YEKLEKIGEG…AEEALQHPYF (283 aa)). ATP is bound by residues 10–18 (IGEGTYGTV) and Lys33. Residue Tyr15 is modified to Phosphotyrosine; by ABL1, EPHA4 and FYN. A Phosphothreonine modification is found at Thr17. Lys56 carries the post-translational modification N6-acetyllysine. Ser72 is modified (phosphoserine). Residue Asp126 is the Proton acceptor of the active site. Residue Ser159 is modified to Phosphoserine.

This sequence belongs to the protein kinase superfamily. CMGC Ser/Thr protein kinase family. CDC2/CDKX subfamily. As to quaternary structure, heterodimer composed of a catalytic subunit CDK5 and a regulatory subunit CDK5R1 (p25) and macromolecular complex composed of at least CDK5, CDK5R1 (p35) and CDK5RAP1 or CDK5RAP2 or CDK5RAP3. Only the heterodimer shows kinase activity. Under neurotoxic stress and neuronal injury conditions, p35 is cleaved by calpain to generate p25 that hyperactivates CDK5, that becomes functionally disabled and often toxic. Found in a trimolecular complex with CABLES1 and ABL1. Interacts with CABLES1 and CABLES2. Interacts with AATK and GSTP1. Binds to HDAC1 when in complex with p25. Interaction with myristoylation p35 promotes CDK5 association with membranes. Both isoforms 1 and 2 interacts with beta-catenin/CTNNB1. Interacts with delta-catenin/CTNND2 and APEX1. Interacts with P53/TP53 in neurons. Interacts with PTK2/FAK1. Interacts with EPHA4; may mediate the activation of NGEF by EPHA4. The complex p35/CDK5 interacts with CLOCK. Interacts with HTR6. Phosphorylation on Tyr-15 by ABL1 and FYN, and on Ser-159 by casein kinase 1 promotes kinase activity. By contrast, phosphorylation at Thr-14 inhibits activity. Post-translationally, phosphorylation at Ser-159 is essential for maximal catalytic activity. Expressed in hippocampal neuronal synaptic termini (at protein level). Expressed predominantly in post-mitotic neurons of the central and peripheral nervous system.

Its subcellular location is the cytoplasm. It is found in the nucleus. It localises to the cell membrane. The protein resides in the perikaryon. The protein localises to the cell projection. Its subcellular location is the lamellipodium. It is found in the growth cone. It localises to the postsynaptic density. The protein resides in the synapse. The enzyme catalyses L-seryl-[protein] + ATP = O-phospho-L-seryl-[protein] + ADP + H(+). It catalyses the reaction L-threonyl-[protein] + ATP = O-phospho-L-threonyl-[protein] + ADP + H(+). Inhibited by 2-(1-ethyl-2-hydroxyethylamino)-6-benzylamino-9-isopropylpurine (roscovitine), 1-isopropyl-4-aminobenzyl-6-ether-linked benzimidazoles, resveratrol, AT-7519 and olomoucine. Activated by CDK5R1 (p35) and CDK5R2 (p39) during the development of the nervous system; degradation of CDK5R1 (p35) and CDK5R2 (p39) by proteasome result in down regulation of kinase activity, during this process, CDK5 phosphorylates p35 and induces its ubiquitination and subsequent degradation. Kinase activity is mainly determined by the amount of p35 available and subcellular location; reversible association to plasma membrane inhibits activity. Long-term inactivation as well as CDK5R1 (p25)-mediated hyperactivation of CDK5 triggers cell death. The pro-death activity of hyperactivated CDK5 is suppressed by membrane association of CDK5, via myristoylation of p35. Brain-derived neurotrophic factor, glial-derived neurotrophic factor, nerve growth factor (NGF), retinoic acid, laminin and neuregulin promote activity. Neurotoxicity enhances nuclear activity, thus leading to MEF2 phosphorylation and inhibition prior to apoptosis of cortical neurons. Repression by GSTP1 via p25/p35 translocation prevents neurodegeneration. In terms of biological role, proline-directed serine/threonine-protein kinase essential for neuronal cell cycle arrest and differentiation and may be involved in apoptotic cell death in neuronal diseases by triggering abortive cell cycle re-entry. Interacts with D1 and D3-type G1 cyclins. Phosphorylates SRC, NOS3, VIM/vimentin, p35/CDK5R1, MEF2A, SIPA1L1, SH3GLB1, PXN, PAK1, MCAM/MUC18, SEPT5, SYN1, DNM1, AMPH, SYNJ1, CDK16, RAC1, RHOA, CDC42, TONEBP/NFAT5, MAPT/TAU, MAP1B, histone H1, p53/TP53, HDAC1, APEX1, PTK2/FAK1, huntingtin/HTT, ATM, MAP2, NEFH and NEFM. Regulates several neuronal development and physiological processes including neuronal survival, migration and differentiation, axonal and neurite growth, synaptogenesis, oligodendrocyte differentiation, synaptic plasticity and neurotransmission, by phosphorylating key proteins. Negatively regulates the CACNA1B/CAV2.2 -mediated Ca(2+) release probability at hippocampal neuronal soma and synaptic terminals. Activated by interaction with CDK5R1 (p35) and CDK5R2 (p39), especially in postmitotic neurons, and promotes CDK5R1 (p35) expression in an autostimulation loop. Phosphorylates many downstream substrates such as Rho and Ras family small GTPases (e.g. PAK1, RAC1, RHOA, CDC42) or microtubule-binding proteins (e.g. MAPT/TAU, MAP2, MAP1B), and modulates actin dynamics to regulate neurite growth and/or spine morphogenesis. Also phosphorylates exocytosis associated proteins such as MCAM/MUC18, SEPT5, SYN1, and CDK16/PCTAIRE1 as well as endocytosis associated proteins such as DNM1, AMPH and SYNJ1 at synaptic terminals. In the mature central nervous system (CNS), regulates neurotransmitter movements by phosphorylating substrates associated with neurotransmitter release and synapse plasticity; synaptic vesicle exocytosis, vesicles fusion with the presynaptic membrane, and endocytosis. Promotes cell survival by activating anti-apoptotic proteins BCL2 and STAT3, and negatively regulating of JNK3/MAPK10 activity. Phosphorylation of p53/TP53 in response to genotoxic and oxidative stresses enhances its stabilization by preventing ubiquitin ligase-mediated proteasomal degradation, and induces transactivation of p53/TP53 target genes, thus regulating apoptosis. Phosphorylation of p35/CDK5R1 enhances its stabilization by preventing calpain-mediated proteolysis producing p25/CDK5R1 and avoiding ubiquitin ligase-mediated proteasomal degradation. During aberrant cell-cycle activity and DNA damage, p25/CDK5 activity elicits cell-cycle activity and double-strand DNA breaks that precedes neuronal death by deregulating HDAC1. DNA damage triggered phosphorylation of huntingtin/HTT in nuclei of neurons protects neurons against polyglutamine expansion as well as DNA damage mediated toxicity. Phosphorylation of PXN reduces its interaction with PTK2/FAK1 in matrix-cell focal adhesions (MCFA) during oligodendrocytes (OLs) differentiation. Negative regulator of Wnt/beta-catenin signaling pathway. Activator of the GAIT (IFN-gamma-activated inhibitor of translation) pathway, which suppresses expression of a post-transcriptional regulon of proinflammatory genes in myeloid cells; phosphorylates the linker domain of glutamyl-prolyl tRNA synthetase (EPRS) in a IFN-gamma-dependent manner, the initial event in assembly of the GAIT complex. Phosphorylation of SH3GLB1 is required for autophagy induction in starved neurons. Phosphorylation of TONEBP/NFAT5 in response to osmotic stress mediates its rapid nuclear localization. MEF2 is inactivated by phosphorylation in nucleus in response to neurotoxin, thus leading to neuronal apoptosis. APEX1 AP-endodeoxyribonuclease is repressed by phosphorylation, resulting in accumulation of DNA damage and contributing to neuronal death. NOS3 phosphorylation down regulates NOS3-derived nitrite (NO) levels. SRC phosphorylation mediates its ubiquitin-dependent degradation and thus leads to cytoskeletal reorganization. May regulate endothelial cell migration and angiogenesis via the modulation of lamellipodia formation. Involved in dendritic spine morphogenesis by mediating the EFNA1-EPHA4 signaling. The complex p35/CDK5 participates in the regulation of the circadian clock by modulating the function of CLOCK protein: phosphorylates CLOCK at 'Thr-451' and 'Thr-461' and regulates the transcriptional activity of the CLOCK-BMAL1 heterodimer in association with altered stability and subcellular distribution. The polypeptide is Cyclin-dependent kinase 5 (Rattus norvegicus (Rat)).